The primary structure comprises 97 residues: U-reduvitoxin-Pr11a (97 aa).

Positions M1–M20 are cleaved as a signal peptide. Pacifastin domains follow at residues R22–R59 and E62–L97. 3 disulfide bridges follow: C24/C42, C37/C56, and C40/C51. The segment at P57–R59 is pro-Pro-Arg motif necessary for proteolytic processing. 3 disulfides stabilise this stretch: C65-C82, C77-C96, and C80-C91.

The protein belongs to the protease inhibitor I19 family. Expressed by the venom gland.

It localises to the secreted. Functionally, inhibits trypsin activity and prophenoloxidase (PPO) activation, an enzyme essential for both clotting and insect innate immune responses. It does not inhibit activity of chymotrypsin and protease K, and has no effect on phenoloxidase (PO) activity. This is U-reduvitoxin-Pr11a from Platymeris rhadamanthus (Red spot assassin bug).